The sequence spans 487 residues: MELLFVSLLSLFLLILLPLSLLFLFPSSFSTTTTEANKNSANLPPGLTGWPVVGESFQFLAAGWRGNPEKFIFDRIAKYSSYVYKTNLMLERTAVFCGAPAHKFLFSNENKLVQSWWPSSVNKIFPSSNQTSSKEEAMKMRKMLPNFFKPEALQGYIGIMDTIAQRHFAADWDNKDYIVVFPLCKRYTFWLACKIFMSIEDPKDVDRFLARFNLVAEGLLSIPIDLPGTPFHHSIKAAEFIREHLVAIIKQRKIDLAEGKASPTQDIMSYMLLTPDEDGKFMKEYDIADKILGLLVGGHDTASSACAFIVKYLAELPQVYQGVYKEQMEIAKSKGPGELLNWDDIQKMKYSWNVACEVLRLAPPLQGAFRDVLKDFMYEGFYIPKGWKVYWSAHSTHKNPEYFPEPYKFDPSRFDGSGPAPYTFVPFGGGPRMCPGKEYARLEILVFMHNLVKRFRWEKLIPDEKIVVNPMPVPEKGLPIRLFSYDA.

A helical membrane pass occupies residues 5–25 (FVSLLSLFLLILLPLSLLFLF). Cys-434 serves as a coordination point for heme.

Belongs to the cytochrome P450 family. The cofactor is heme.

It localises to the membrane. It carries out the reaction beta-amyrin + reduced [NADPH--hemoprotein reductase] + O2 = erythrodiol + oxidized [NADPH--hemoprotein reductase] + H2O + H(+). The catalysed reaction is erythrodiol + reduced [NADPH--hemoprotein reductase] + O2 = oleanolic aldehyde + oxidized [NADPH--hemoprotein reductase] + 2 H2O + H(+). It catalyses the reaction oleanolic aldehyde + reduced [NADPH--hemoprotein reductase] + O2 = oleanolate + oxidized [NADPH--hemoprotein reductase] + H2O + 2 H(+). Catalyzes the C-28 oxidation of beta-amyrin to form erythrodiol. Catalyzes the C-28 oxidation of erythrodiol to form oleanolic aldehyde. Catalyzes the C-28 oxidation of oleanolic aldehyde to form oleanolate. The protein is Cytochrome P450 716A75 of Maesa lanceolata (False assegai).